A 338-amino-acid chain; its full sequence is Ketol-acid reductoisomerase (NADP(+)) (338 aa).

In terms of domain architecture, KARI N-terminal Rossmann spans 1–181 (MKVFYDKDCD…GGGRTGIIET (181 aa)). NADP(+)-binding positions include 24–27 (YGSQ), R47, S50, T52, and 82–85 (DEFQ). H107 is an active-site residue. Position 133 (G133) interacts with NADP(+). A KARI C-terminal knotted domain is found at 182-327 (TFKDETETDL…EQLRSMMPWI (146 aa)). Mg(2+) is bound by residues D190, E194, E226, and E230. S251 is a binding site for substrate.

It belongs to the ketol-acid reductoisomerase family. Mg(2+) serves as cofactor.

The enzyme catalyses (2R)-2,3-dihydroxy-3-methylbutanoate + NADP(+) = (2S)-2-acetolactate + NADPH + H(+). It catalyses the reaction (2R,3R)-2,3-dihydroxy-3-methylpentanoate + NADP(+) = (S)-2-ethyl-2-hydroxy-3-oxobutanoate + NADPH + H(+). It functions in the pathway amino-acid biosynthesis; L-isoleucine biosynthesis; L-isoleucine from 2-oxobutanoate: step 2/4. It participates in amino-acid biosynthesis; L-valine biosynthesis; L-valine from pyruvate: step 2/4. Involved in the biosynthesis of branched-chain amino acids (BCAA). Catalyzes an alkyl-migration followed by a ketol-acid reduction of (S)-2-acetolactate (S2AL) to yield (R)-2,3-dihydroxy-isovalerate. In the isomerase reaction, S2AL is rearranged via a Mg-dependent methyl migration to produce 3-hydroxy-3-methyl-2-ketobutyrate (HMKB). In the reductase reaction, this 2-ketoacid undergoes a metal-dependent reduction by NADPH to yield (R)-2,3-dihydroxy-isovalerate. The protein is Ketol-acid reductoisomerase (NADP(+)) of Pseudomonas fluorescens (strain ATCC BAA-477 / NRRL B-23932 / Pf-5).